The sequence spans 211 residues: Thymidylate kinase (211 aa).

12–19 contacts ATP; sequence GIDGSGKS.

This sequence belongs to the thymidylate kinase family.

It catalyses the reaction dTMP + ATP = dTDP + ADP. In terms of biological role, phosphorylation of dTMP to form dTDP in both de novo and salvage pathways of dTTP synthesis. This Ruegeria pomeroyi (strain ATCC 700808 / DSM 15171 / DSS-3) (Silicibacter pomeroyi) protein is Thymidylate kinase.